A 404-amino-acid polypeptide reads, in one-letter code: MKLPIYLDYSATTPVDPRVAQKMSECLLVDGNFGNPASRSHVFGWKAEESVENARRQVADLVNADPREIVWTSGATESDNLAIKGAAHFYASKGKHLITSKIEHKAVLDTMRQLEREGFEVTYLDPTEDGLITPAMIEAALREDTILVSVMHVNNEIGTVNDIAAIGELLRSKGILFHVDAAQSTGKVEIDLQKLKVDMMSFSAHKTYGPKGIGALYVSRKPRVRIEATMHGGGHERGMRSGTLATHQIVGMGEAFRVAKEDMAAENVRIKALSDRFYKQVEHLEELYVNGSLTARVPHNLNLSFNYVEGESLIMALKDLAVSSGSACTSASLEPSYVLRALGRNDELAHSSIRFTFGRFTTEEEIDYAAQKVCEAVTKLRALSPLWDMYKDGVDISKIEWAAH.

Pyridoxal 5'-phosphate contacts are provided by residues 75–76 (AT), N155, Q183, and 203–205 (SAH). At K206 the chain carries N6-(pyridoxal phosphate)lysine. Residue T243 participates in pyridoxal 5'-phosphate binding. C328 serves as the catalytic Cysteine persulfide intermediate. C328 serves as a coordination point for [2Fe-2S] cluster.

The protein belongs to the class-V pyridoxal-phosphate-dependent aminotransferase family. NifS/IscS subfamily. As to quaternary structure, homodimer. Forms a heterotetramer with IscU, interacts with other sulfur acceptors. The cofactor is pyridoxal 5'-phosphate.

It is found in the cytoplasm. It catalyses the reaction (sulfur carrier)-H + L-cysteine = (sulfur carrier)-SH + L-alanine. It functions in the pathway cofactor biosynthesis; iron-sulfur cluster biosynthesis. Functionally, master enzyme that delivers sulfur to a number of partners involved in Fe-S cluster assembly, tRNA modification or cofactor biosynthesis. Catalyzes the removal of elemental sulfur atoms from cysteine to produce alanine. Functions as a sulfur delivery protein for Fe-S cluster synthesis onto IscU, an Fe-S scaffold assembly protein, as well as other S acceptor proteins. The sequence is that of Cysteine desulfurase IscS from Pseudomonas fluorescens (strain Pf0-1).